The primary structure comprises 1207 residues: Ras GTPase-activating protein gap-2 (1207 aa).

Disordered stretches follow at residues methionine 1–lysine 29 and arginine 221–arginine 316. One can recognise a PH domain in the interval proline 40–asparagine 383. Residues serine 223–serine 236 show a composition bias toward low complexity. 2 stretches are compositionally biased toward polar residues: residues threonine 237 to tyrosine 247 and alanine 286 to tyrosine 297. One can recognise a C2 domain in the interval tryptophan 374–tyrosine 490. Polar residues predominate over residues serine 495–isoleucine 504. The disordered stretch occupies residues serine 495 to glutamate 516. Positions asparagine 579 to isoleucine 789 constitute a Ras-GAP domain. Disordered regions lie at residues glycine 856 to serine 903, phenylalanine 923 to serine 1013, alanine 1086 to arginine 1107, and leucine 1163 to asparagine 1207. Polar residues-rich tracts occupy residues methionine 862 to glutamine 876 and threonine 891 to serine 903. Residues threonine 939 to serine 953 are compositionally biased toward low complexity. Over residues glutamate 955–arginine 972 the composition is skewed to basic and acidic residues. Over residues alanine 985 to serine 1013 the composition is skewed to low complexity. The span at serine 1181–asparagine 1207 shows a compositional bias: low complexity.

As to expression, mainly expressed in gonads and vulval cells. Isoform c in expressed in pharyngeal epithelial cells and several rectal/blast cells in the tail region. Isoform f is weakly expressed in four cells symmetrically located in the vulval region. Isoform g is strongly expressed in the pharyngeal muscle cells m6 in addition to several cells in the tail region.

Its subcellular location is the cytoplasm. GTPase-activating protein, which acts as a negative regulator for the member of the Ras family let-60. Probably decreases the signaling activity of Ras by stimulating its intrinsic GTPase activity, thereby lowering the levels of GTP-bound, active Ras. The different isoforms may play a distinct role in specific tissues. This is Ras GTPase-activating protein gap-2 (gap-2) from Caenorhabditis elegans.